The chain runs to 514 residues: 2,3-bisphosphoglycerate-independent phosphoglycerate mutase (514 aa).

Asp-14 and Ser-64 together coordinate Mn(2+). The Phosphoserine intermediate role is filled by Ser-64. Substrate is bound by residues His-125, 155–156 (RD), Arg-187, Arg-193, 263–266 (RADR), and Lys-336. Positions 403, 407, 444, 445, and 463 each coordinate Mn(2+).

This sequence belongs to the BPG-independent phosphoglycerate mutase family. In terms of assembly, monomer. Mn(2+) is required as a cofactor.

It catalyses the reaction (2R)-2-phosphoglycerate = (2R)-3-phosphoglycerate. It functions in the pathway carbohydrate degradation; glycolysis; pyruvate from D-glyceraldehyde 3-phosphate: step 3/5. Its activity is regulated as follows. Insensitive to vanadate. Functionally, catalyzes the interconversion of 2-phosphoglycerate (2-PGA) and 3-phosphoglycerate (3-PGA). The protein is 2,3-bisphosphoglycerate-independent phosphoglycerate mutase of Escherichia coli (strain K12).